A 272-amino-acid chain; its full sequence is 4-hydroxy-tetrahydrodipicolinate reductase (272 aa).

NAD(+) contacts are provided by residues 10-15 (GAGGRM), Glu-36, 100-102 (GTT), and 124-127 (SGNM). The active-site Proton donor/acceptor is His-157. Residue His-158 coordinates (S)-2,3,4,5-tetrahydrodipicolinate. Lys-161 acts as the Proton donor in catalysis. A (S)-2,3,4,5-tetrahydrodipicolinate-binding site is contributed by 167 to 168 (GT).

This sequence belongs to the DapB family.

Its subcellular location is the cytoplasm. It catalyses the reaction (S)-2,3,4,5-tetrahydrodipicolinate + NAD(+) + H2O = (2S,4S)-4-hydroxy-2,3,4,5-tetrahydrodipicolinate + NADH + H(+). The catalysed reaction is (S)-2,3,4,5-tetrahydrodipicolinate + NADP(+) + H2O = (2S,4S)-4-hydroxy-2,3,4,5-tetrahydrodipicolinate + NADPH + H(+). It functions in the pathway amino-acid biosynthesis; L-lysine biosynthesis via DAP pathway; (S)-tetrahydrodipicolinate from L-aspartate: step 4/4. Functionally, catalyzes the conversion of 4-hydroxy-tetrahydrodipicolinate (HTPA) to tetrahydrodipicolinate. This is 4-hydroxy-tetrahydrodipicolinate reductase from Bradyrhizobium sp. (strain ORS 278).